Reading from the N-terminus, the 518-residue chain is Probable protein phosphatase 2C 14 (518 aa).

Low complexity-rich tracts occupy residues 1–10 (MVEAAAGRRS) and 86–105 (PQRQ…APGA). Disordered stretches follow at residues 1–31 (MVEA…QQHQ) and 86–108 (PQRQ…ADGR). In terms of domain architecture, PPM-type phosphatase spans 129–437 (VASLYTLQGK…DDCAVVCLFL (309 aa)). D165 and G166 together coordinate Mn(2+). Positions 192-222 (TDEGRQTSTSSIKSNGDETGSPGNMGRDAEQ) are disordered. A compositionally biased stretch (polar residues) spans 197–213 (QTSTSSIKSNGDETGSP). Mn(2+) contacts are provided by D382 and D428.

Belongs to the PP2C family. Mg(2+) is required as a cofactor. It depends on Mn(2+) as a cofactor.

It carries out the reaction O-phospho-L-seryl-[protein] + H2O = L-seryl-[protein] + phosphate. The catalysed reaction is O-phospho-L-threonyl-[protein] + H2O = L-threonyl-[protein] + phosphate. This Oryza sativa subsp. japonica (Rice) protein is Probable protein phosphatase 2C 14.